Consider the following 325-residue polypeptide: Tetraacyldisaccharide 4'-kinase (325 aa).

Position 55–62 (threonine 55–threonine 62) interacts with ATP.

This sequence belongs to the LpxK family.

The enzyme catalyses a lipid A disaccharide + ATP = a lipid IVA + ADP + H(+). Its pathway is glycolipid biosynthesis; lipid IV(A) biosynthesis; lipid IV(A) from (3R)-3-hydroxytetradecanoyl-[acyl-carrier-protein] and UDP-N-acetyl-alpha-D-glucosamine: step 6/6. Its function is as follows. Transfers the gamma-phosphate of ATP to the 4'-position of a tetraacyldisaccharide 1-phosphate intermediate (termed DS-1-P) to form tetraacyldisaccharide 1,4'-bis-phosphate (lipid IVA). This Salmonella paratyphi C (strain RKS4594) protein is Tetraacyldisaccharide 4'-kinase.